Consider the following 504-residue polypeptide: ATP synthase subunit alpha, chloroplastic (504 aa).

Position 170–177 (170–177 (GDRQTGKT)) interacts with ATP. At Thr257 the chain carries Phosphothreonine.

The protein belongs to the ATPase alpha/beta chains family. In terms of assembly, F-type ATPases have 2 components, CF(1) - the catalytic core - and CF(0) - the membrane proton channel. CF(1) has five subunits: alpha(3), beta(3), gamma(1), delta(1), epsilon(1). CF(0) has four main subunits: a, b, b' and c.

The protein localises to the plastid. Its subcellular location is the chloroplast thylakoid membrane. The catalysed reaction is ATP + H2O + 4 H(+)(in) = ADP + phosphate + 5 H(+)(out). Produces ATP from ADP in the presence of a proton gradient across the membrane. The alpha chain is a regulatory subunit. This chain is ATP synthase subunit alpha, chloroplastic, found in Nasturtium officinale (Watercress).